The chain runs to 625 residues: Vacuolar-sorting receptor 7 (625 aa).

A signal peptide spans Met1–Ala26. At Arg27–Ala564 the chain is on the lumenal side. Positions Asp58–Phe166 constitute a PA domain. Asn292, Asn400, and Asn432 each carry an N-linked (GlcNAc...) asparagine glycan. EGF-like domains are found at residues Glu414–Thr464 and Gly467–Glu513. 7 cysteine pairs are disulfide-bonded: Cys418-Cys436, Cys425-Cys445, Cys447-Cys463, Cys471-Cys491, Cys478-Cys499, Cys501-Cys512, and Cys542-Cys555. One can recognise an EGF-like 3; calcium-binding domain in the interval Asp514–Ile556. Residues Trp565–Phe585 traverse the membrane as a helical segment. Over Tyr586–Leu625 the chain is Cytoplasmic. The Tyrosine-based internalization motif signature appears at Tyr605–Leu608.

The protein belongs to the VSR (BP-80) family. Expressed at low levels in seedlings, roots, young leaves, flowers and siliques.

It localises to the golgi apparatus membrane. Functionally, vacuolar-sorting receptor (VSR) involved in clathrin-coated vesicles sorting from Golgi apparatus to vacuoles. In Arabidopsis thaliana (Mouse-ear cress), this protein is Vacuolar-sorting receptor 7 (VSR7).